The primary structure comprises 538 residues: Carboxypeptidase 2 (538 aa).

The first 21 residues, 1-21, serve as a signal peptide directing secretion; sequence MVAYRFLTLISLGLGSHCASA. N46 is a glycosylation site (N-linked (GlcNAc...) asparagine). The interval 53–76 is disordered; it reads PAFTSPGTVPRGFSDGTSGPTRDE. Residues 71 to 351 enclose the Peptidase M14 domain; the sequence is GPTRDETMEG…VMVKSILQTA (281 aa). Zn(2+)-binding residues include H136, E139, and H224. E322 acts as the Proton donor/acceptor in catalysis. 2 N-linked (GlcNAc...) asparagine glycosylation sites follow: N393 and N459.

Belongs to the peptidase M14 family. Zn(2+) is required as a cofactor.

It localises to the secreted. Its function is as follows. Extracellular metalloprotease that contributes to pathogenicity. In Trichophyton tonsurans (Scalp ringworm fungus), this protein is Carboxypeptidase 2 (MCPB).